Here is a 218-residue protein sequence, read N- to C-terminus: Replication protein RepB (218 aa).

Positions 1–26 (MKSESKIDWTVPRPNKNPKTKQPYKR) are disordered. Basic residues predominate over residues 16-26 (KNPKTKQPYKR).

Belongs to the Gram-positive plasmids replication protein type 2 family.

Is essential for plasmid replication. Nicks the positive strand at the plus origin of replication. In Lactiplantibacillus plantarum (Lactobacillus plantarum), this protein is Replication protein RepB (repB).